A 313-amino-acid chain; its full sequence is Homoserine O-succinyltransferase (313 aa).

The active-site Acyl-thioester intermediate is cysteine 142. The substrate site is built by lysine 163 and serine 192. Histidine 235 functions as the Proton acceptor in the catalytic mechanism. Glutamate 237 is a catalytic residue. Residue arginine 249 coordinates substrate.

The protein belongs to the MetA family.

Its subcellular location is the cytoplasm. The catalysed reaction is L-homoserine + succinyl-CoA = O-succinyl-L-homoserine + CoA. Its pathway is amino-acid biosynthesis; L-methionine biosynthesis via de novo pathway; O-succinyl-L-homoserine from L-homoserine: step 1/1. Its function is as follows. Transfers a succinyl group from succinyl-CoA to L-homoserine, forming succinyl-L-homoserine. The chain is Homoserine O-succinyltransferase from Vibrio vulnificus (strain CMCP6).